The chain runs to 475 residues: Aspartyl/glutamyl-tRNA(Asn/Gln) amidotransferase subunit B (475 aa).

It belongs to the GatB/GatE family. GatB subfamily. As to quaternary structure, heterotrimer of A, B and C subunits.

It catalyses the reaction L-glutamyl-tRNA(Gln) + L-glutamine + ATP + H2O = L-glutaminyl-tRNA(Gln) + L-glutamate + ADP + phosphate + H(+). The catalysed reaction is L-aspartyl-tRNA(Asn) + L-glutamine + ATP + H2O = L-asparaginyl-tRNA(Asn) + L-glutamate + ADP + phosphate + 2 H(+). Allows the formation of correctly charged Asn-tRNA(Asn) or Gln-tRNA(Gln) through the transamidation of misacylated Asp-tRNA(Asn) or Glu-tRNA(Gln) in organisms which lack either or both of asparaginyl-tRNA or glutaminyl-tRNA synthetases. The reaction takes place in the presence of glutamine and ATP through an activated phospho-Asp-tRNA(Asn) or phospho-Glu-tRNA(Gln). The chain is Aspartyl/glutamyl-tRNA(Asn/Gln) amidotransferase subunit B from Staphylococcus haemolyticus (strain JCSC1435).